The chain runs to 256 residues: Transcription factor BHLH094 (256 aa).

The interval 1–125 (MDPAPSLAAE…TPPEPPKQDY (125 aa)) is disordered. Positions 79 to 97 (PEAKRLKPMKSSDKNDSLR) are enriched in basic and acidic residues. The tract at residues 134–147 (QATDSHSLAERARR) is basic motif; degenerate. In terms of domain architecture, bHLH spans 134–184 (QATDSHSLAERARREKISERMKILQDLVPGCNKVIGKASVLDEIINYIQSL). Positions 148–184 (EKISERMKILQDLVPGCNKVIGKASVLDEIINYIQSL) are helix-loop-helix motif.

This sequence belongs to the bHLH protein family. Interacts with RSS3. Forms a ternary complex with RSS3 and TIFY11A/JAZ9 in the nucleus.

Its subcellular location is the nucleus. Transcription factor that forms a ternary complex with RSS3 and TIFY11A/JAZ9 to negatively regulate jasmonate-responsive genes. The sequence is that of Transcription factor BHLH094 from Oryza sativa subsp. japonica (Rice).